The chain runs to 203 residues: Ribonuclease HII (203 aa).

The region spanning 15 to 201 is the RNase H type-2 domain; sequence LLVAGLDEAG…VAQAPLRFPE (187 aa). A divalent metal cation-binding residues include D21, E22, and D111.

This sequence belongs to the RNase HII family. The cofactor is Mn(2+). It depends on Mg(2+) as a cofactor.

The protein resides in the cytoplasm. It carries out the reaction Endonucleolytic cleavage to 5'-phosphomonoester.. In terms of biological role, endonuclease that specifically degrades the RNA of RNA-DNA hybrids. This is Ribonuclease HII from Thermus thermophilus (strain ATCC 27634 / DSM 579 / HB8).